The primary structure comprises 435 residues: MVVNVIGAGLAGSEVVYNLGKRGVKVRLYEMRPKKMTEVHKTGYFAELVCSNSFKSEEVTNAEGLLKAEMKMMGSVVLEVAERTRVPSGKALAVDRNAFARKVTEIIEDMENVEIVREEVTSFNPDEGIWIVATGPATSEGLLSFLKELLGEDFLFFFDAVSPIVSFESIDMSRAFWGDRFGKGNDYINCPLTQEEYEELWKALVEAEVIEMEDFDRSLLFERCQPVEEIARSGKDALRYGPLRPTGLVDPRTGKEPYAVVQLRREDKEGKFYSLVGFQTRLKWGEQKKVIQKIPCLRNAEIVRYGVMHRNIYINSPRVLDPFFRLKKHPSVFFAGQITGVEGYMESAASGIYVAYNVYRILRGLSPLRLPEETMMGALFSYIIEKVEGDLKPMYANFGLLPPLSVRVRNKFERRKRLAERAMKAMREFLEKNPW.

G7–G12 is a binding site for FAD.

The protein belongs to the MnmG family. TrmFO subfamily. The cofactor is FAD.

Its subcellular location is the cytoplasm. It carries out the reaction uridine(54) in tRNA + (6R)-5,10-methylene-5,6,7,8-tetrahydrofolate + NADH + H(+) = 5-methyluridine(54) in tRNA + (6S)-5,6,7,8-tetrahydrofolate + NAD(+). It catalyses the reaction uridine(54) in tRNA + (6R)-5,10-methylene-5,6,7,8-tetrahydrofolate + NADPH + H(+) = 5-methyluridine(54) in tRNA + (6S)-5,6,7,8-tetrahydrofolate + NADP(+). Functionally, catalyzes the folate-dependent formation of 5-methyl-uridine at position 54 (M-5-U54) in all tRNAs. The sequence is that of Methylenetetrahydrofolate--tRNA-(uracil-5-)-methyltransferase TrmFO from Thermotoga neapolitana (strain ATCC 49049 / DSM 4359 / NBRC 107923 / NS-E).